The chain runs to 231 residues: tRNA1(Val) (adenine(37)-N6)-methyltransferase (231 aa).

The protein belongs to the methyltransferase superfamily. tRNA (adenine-N(6)-)-methyltransferase family.

The protein resides in the cytoplasm. The enzyme catalyses adenosine(37) in tRNA1(Val) + S-adenosyl-L-methionine = N(6)-methyladenosine(37) in tRNA1(Val) + S-adenosyl-L-homocysteine + H(+). Specifically methylates the adenine in position 37 of tRNA(1)(Val) (anticodon cmo5UAC). The protein is tRNA1(Val) (adenine(37)-N6)-methyltransferase of Flavobacteriaceae bacterium (strain 3519-10).